The following is a 493-amino-acid chain: ATP synthase subunit beta, chloroplastic (493 aa).

Residue 170–177 participates in ATP binding; that stretch reads GGAGVGKT.

The protein belongs to the ATPase alpha/beta chains family. As to quaternary structure, F-type ATPases have 2 components, CF(1) - the catalytic core - and CF(0) - the membrane proton channel. CF(1) has five subunits: alpha(3), beta(3), gamma(1), delta(1), epsilon(1). CF(0) has four main subunits: a(1), b(1), b'(1) and c(9-12).

It localises to the plastid. The protein resides in the chloroplast thylakoid membrane. The enzyme catalyses ATP + H2O + 4 H(+)(in) = ADP + phosphate + 5 H(+)(out). Its function is as follows. Produces ATP from ADP in the presence of a proton gradient across the membrane. The catalytic sites are hosted primarily by the beta subunits. The chain is ATP synthase subunit beta, chloroplastic from Staurastrum punctulatum (Green alga).